The chain runs to 72 residues: Translation initiation factor IF-1 2 (72 aa).

Residues 1 to 72 form the S1-like domain; that stretch reads MSKDDVIEVE…TRGRIVYRYK (72 aa).

The protein belongs to the IF-1 family. In terms of assembly, component of the 30S ribosomal translation pre-initiation complex which assembles on the 30S ribosome in the order IF-2 and IF-3, IF-1 and N-formylmethionyl-tRNA(fMet); mRNA recruitment can occur at any time during PIC assembly.

It is found in the cytoplasm. In terms of biological role, one of the essential components for the initiation of protein synthesis. Stabilizes the binding of IF-2 and IF-3 on the 30S subunit to which N-formylmethionyl-tRNA(fMet) subsequently binds. Helps modulate mRNA selection, yielding the 30S pre-initiation complex (PIC). Upon addition of the 50S ribosomal subunit IF-1, IF-2 and IF-3 are released leaving the mature 70S translation initiation complex. This chain is Translation initiation factor IF-1 2, found in Symbiobacterium thermophilum (strain DSM 24528 / JCM 14929 / IAM 14863 / T).